The sequence spans 195 residues: Lipid A acyltransferase PagP (195 aa).

Positions 1-30 (MRLTLTSRSRLFVLSSLLFISTFDVLSAQA) are cleaved as a signal peptide. Active-site residues include histidine 67, aspartate 110, and serine 111.

Belongs to the lipid A palmitoyltransferase family. Homodimer.

The protein resides in the cell outer membrane. It catalyses the reaction a lipid A + a 1,2-diacyl-sn-glycero-3-phosphocholine = a hepta-acyl lipid A + a 2-acyl-sn-glycero-3-phosphocholine. It carries out the reaction a lipid IVA + a 1,2-diacyl-sn-glycero-3-phosphocholine = a lipid IVB + a 2-acyl-sn-glycero-3-phosphocholine. The enzyme catalyses a lipid IIA + a 1,2-diacyl-sn-glycero-3-phosphocholine = a lipid IIB + a 2-acyl-sn-glycero-3-phosphocholine. In terms of biological role, transfers a fatty acid residue from the sn-1 position of a phospholipid to the N-linked hydroxyfatty acid chain on the proximal unit of lipid A or its precursors. This Dickeya chrysanthemi (strain Ech1591) (Dickeya zeae (strain Ech1591)) protein is Lipid A acyltransferase PagP.